Consider the following 94-residue polypeptide: Exodeoxyribonuclease 7 small subunit (94 aa).

The interval 1–21 (MPRAPNDAPSASATPSATPAS) is disordered.

It belongs to the XseB family. As to quaternary structure, heterooligomer composed of large and small subunits.

It is found in the cytoplasm. The enzyme catalyses Exonucleolytic cleavage in either 5'- to 3'- or 3'- to 5'-direction to yield nucleoside 5'-phosphates.. Bidirectionally degrades single-stranded DNA into large acid-insoluble oligonucleotides, which are then degraded further into small acid-soluble oligonucleotides. The protein is Exodeoxyribonuclease 7 small subunit of Ralstonia pickettii (strain 12J).